The chain runs to 604 residues: Glutamine--fructose-6-phosphate aminotransferase [isomerizing] (604 aa).

Catalysis depends on Cys-2, which acts as the Nucleophile; for GATase activity. The Glutamine amidotransferase type-2 domain maps to 2–219 (CGIMGAVSER…EGDSACVTTQ (218 aa)). SIS domains are found at residues 279–427 (LRAS…DNRA) and 454–594 (LASL…VDQP). The For Fru-6P isomerization activity role is filled by Lys-599.

In terms of assembly, homodimer.

The protein resides in the cytoplasm. It carries out the reaction D-fructose 6-phosphate + L-glutamine = D-glucosamine 6-phosphate + L-glutamate. Catalyzes the first step in hexosamine metabolism, converting fructose-6P into glucosamine-6P using glutamine as a nitrogen source. This chain is Glutamine--fructose-6-phosphate aminotransferase [isomerizing], found in Legionella pneumophila (strain Lens).